A 453-amino-acid chain; its full sequence is Glutamyl-tRNA reductase (453 aa).

Substrate-binding positions include 50–53, Ser110, 115–117, and Gln121; these read TCNR and EPQ. Cys51 functions as the Nucleophile in the catalytic mechanism. 190–195 is a binding site for NADP(+); that stretch reads GAGEMA. The span at 423 to 436 shows a compositional bias: basic and acidic residues; sequence REKVPTDAHADRKP. Residues 423-453 are disordered; the sequence is REKVPTDAHADRKPPNFAETSDDFDVTDASE. Residues 442–453 are compositionally biased toward acidic residues; sequence TSDDFDVTDASE.

It belongs to the glutamyl-tRNA reductase family. As to quaternary structure, homodimer.

It catalyses the reaction (S)-4-amino-5-oxopentanoate + tRNA(Glu) + NADP(+) = L-glutamyl-tRNA(Glu) + NADPH + H(+). It functions in the pathway porphyrin-containing compound metabolism; protoporphyrin-IX biosynthesis; 5-aminolevulinate from L-glutamyl-tRNA(Glu): step 1/2. In terms of biological role, catalyzes the NADPH-dependent reduction of glutamyl-tRNA(Glu) to glutamate 1-semialdehyde (GSA). This is Glutamyl-tRNA reductase from Solidesulfovibrio magneticus (strain ATCC 700980 / DSM 13731 / RS-1) (Desulfovibrio magneticus).